Reading from the N-terminus, the 548-residue chain is Alpha-humulene synthase (548 aa).

Residues aspartate 302, aspartate 306, and glutamate 453 each contribute to the Mg(2+) site. The DDXXD motif motif lies at 302-306; the sequence is DDIYD.

This sequence belongs to the terpene synthase family. Mostly expressed in rhizomes.

It carries out the reaction (2E,6E)-farnesyl diphosphate = alpha-humulene + diphosphate. Functionally, catalyzes the formation of alpha-humulene in the first step of zerumbone biosynthesis, a highly promising multi-anticancer agent. Also mediates formation of beta-caryophyllene at a much lower level. The sequence is that of Alpha-humulene synthase (ZSS1) from Zingiber zerumbet (Shampoo ginger).